The chain runs to 891 residues: DNA mismatch repair protein MutS (891 aa).

632–639 provides a ligand contact to ATP; that stretch reads GPNMAGKS.

Belongs to the DNA mismatch repair MutS family.

Its function is as follows. This protein is involved in the repair of mismatches in DNA. It is possible that it carries out the mismatch recognition step. This protein has a weak ATPase activity. The sequence is that of DNA mismatch repair protein MutS from Rhodopirellula baltica (strain DSM 10527 / NCIMB 13988 / SH1).